Consider the following 217-residue polypeptide: Adenylate kinase (217 aa).

10–15 (GAGKGT) serves as a coordination point for ATP. Residues 30–59 (STGDMLRAAVKAESELGLQVKEVMASGGLV) are NMP. AMP contacts are provided by residues Thr-31, Arg-36, 57–59 (GLV), 85–88 (GFPR), and Gln-92. Residues 122 to 159 (GRRVHEGSGRIYHVKYDPPKVEGKDDETGEALIQREDD) are LID. ATP-binding positions include Arg-123 and 132 to 133 (IY). Residues Arg-156 and Arg-167 each coordinate AMP. Gly-203 provides a ligand contact to ATP.

This sequence belongs to the adenylate kinase family. In terms of assembly, monomer.

It is found in the cytoplasm. It catalyses the reaction AMP + ATP = 2 ADP. Its pathway is purine metabolism; AMP biosynthesis via salvage pathway; AMP from ADP: step 1/1. Functionally, catalyzes the reversible transfer of the terminal phosphate group between ATP and AMP. Plays an important role in cellular energy homeostasis and in adenine nucleotide metabolism. This is Adenylate kinase from Marinobacter nauticus (strain ATCC 700491 / DSM 11845 / VT8) (Marinobacter aquaeolei).